Reading from the N-terminus, the 293-residue chain is ATP synthase subunit a (293 aa).

Helical transmembrane passes span D40–A60, L97–D117, D151–I171, F188–I208, M225–F245, and A264–V284.

This sequence belongs to the ATPase A chain family. As to quaternary structure, F-type ATPases have 2 components, CF(1) - the catalytic core - and CF(0) - the membrane proton channel. CF(1) has five subunits: alpha(3), beta(3), gamma(1), delta(1), epsilon(1). CF(0) has three main subunits: a(1), b(2) and c(9-12). The alpha and beta chains form an alternating ring which encloses part of the gamma chain. CF(1) is attached to CF(0) by a central stalk formed by the gamma and epsilon chains, while a peripheral stalk is formed by the delta and b chains.

The protein resides in the cell inner membrane. In terms of biological role, key component of the proton channel; it plays a direct role in the translocation of protons across the membrane. The protein is ATP synthase subunit a of Bordetella bronchiseptica (strain ATCC BAA-588 / NCTC 13252 / RB50) (Alcaligenes bronchisepticus).